A 304-amino-acid chain; its full sequence is Oxygen-dependent coproporphyrinogen-III oxidase (304 aa).

Ser-94 is a binding site for substrate. A divalent metal cation contacts are provided by His-98 and His-108. The active-site Proton donor is the His-108. Asn-110–Arg-112 is a binding site for substrate. Residues His-147 and His-177 each coordinate a divalent metal cation. The segment at Tyr-242–Gln-277 is important for dimerization. Gly-260–Arg-262 is a binding site for substrate.

It belongs to the aerobic coproporphyrinogen-III oxidase family. As to quaternary structure, homodimer. A divalent metal cation serves as cofactor.

The protein resides in the cytoplasm. The enzyme catalyses coproporphyrinogen III + O2 + 2 H(+) = protoporphyrinogen IX + 2 CO2 + 2 H2O. Its pathway is porphyrin-containing compound metabolism; protoporphyrin-IX biosynthesis; protoporphyrinogen-IX from coproporphyrinogen-III (O2 route): step 1/1. Functionally, involved in the heme biosynthesis. Catalyzes the aerobic oxidative decarboxylation of propionate groups of rings A and B of coproporphyrinogen-III to yield the vinyl groups in protoporphyrinogen-IX. The sequence is that of Oxygen-dependent coproporphyrinogen-III oxidase from Sodalis glossinidius (strain morsitans).